The chain runs to 235 residues: MSVHIEAKQGEIAESILLPGDPLRAKYIAETFLEDVTCYNNVRGMLGFTGTYKGKRVSVQGTGMGVPSISIYVNELIQSYGVKNLIRVGTCGAIQKDVKVRDVIIAMTACTDSNMNRLTFPGFDFAPAANFDLLKKAYDAGTEKGLHVRVGNVLTADVFYRESMDMVKKLGDYGVLAVEMETTALYTLAAKYGVNALSVLTVSDHIFTGEETTSEERQTTFNEMIEIALDAAIQQ.

Histidine 4 provides a ligand contact to a purine D-ribonucleoside. Residues glycine 20, arginine 24, arginine 43, and arginine 87 to threonine 90 each bind phosphate. Residues glutamate 162, glutamate 179–glutamate 181, and serine 203–aspartate 204 each bind a purine D-ribonucleoside. Catalysis depends on aspartate 204, which acts as the Proton donor.

This sequence belongs to the PNP/UDP phosphorylase family. As to quaternary structure, homohexamer; trimer of homodimers.

The catalysed reaction is a purine D-ribonucleoside + phosphate = a purine nucleobase + alpha-D-ribose 1-phosphate. It carries out the reaction a purine 2'-deoxy-D-ribonucleoside + phosphate = a purine nucleobase + 2-deoxy-alpha-D-ribose 1-phosphate. Functionally, catalyzes the reversible phosphorolytic breakdown of the N-glycosidic bond in the beta-(deoxy)ribonucleoside molecules, with the formation of the corresponding free purine bases and pentose-1-phosphate. In Bacillus anthracis (strain CDC 684 / NRRL 3495), this protein is Purine nucleoside phosphorylase DeoD-type.